Consider the following 264-residue polypeptide: 3-methyl-2-oxobutanoate hydroxymethyltransferase (264 aa).

Mg(2+) is bound by residues Asp-45 and Asp-84. Residues 45-46 (DS), Asp-84, and Lys-112 each bind 3-methyl-2-oxobutanoate. Mg(2+) is bound at residue Glu-114. The active-site Proton acceptor is the Glu-181.

The protein belongs to the PanB family. In terms of assembly, homodecamer; pentamer of dimers. Requires Mg(2+) as cofactor.

The protein resides in the cytoplasm. It carries out the reaction 3-methyl-2-oxobutanoate + (6R)-5,10-methylene-5,6,7,8-tetrahydrofolate + H2O = 2-dehydropantoate + (6S)-5,6,7,8-tetrahydrofolate. Its pathway is cofactor biosynthesis; (R)-pantothenate biosynthesis; (R)-pantoate from 3-methyl-2-oxobutanoate: step 1/2. Catalyzes the reversible reaction in which hydroxymethyl group from 5,10-methylenetetrahydrofolate is transferred onto alpha-ketoisovalerate to form ketopantoate. This chain is 3-methyl-2-oxobutanoate hydroxymethyltransferase, found in Aliivibrio fischeri (strain MJ11) (Vibrio fischeri).